The chain runs to 110 residues: UPF0145 protein BLD_1357 (110 aa).

Belongs to the UPF0145 family.

The sequence is that of UPF0145 protein BLD_1357 from Bifidobacterium longum (strain DJO10A).